The chain runs to 207 residues: Large ribosomal subunit protein uL4 (207 aa).

The interval Arg-45 to Val-89 is disordered. Positions Gly-60 to Gly-71 are enriched in basic residues.

The protein belongs to the universal ribosomal protein uL4 family. As to quaternary structure, part of the 50S ribosomal subunit.

Its function is as follows. One of the primary rRNA binding proteins, this protein initially binds near the 5'-end of the 23S rRNA. It is important during the early stages of 50S assembly. It makes multiple contacts with different domains of the 23S rRNA in the assembled 50S subunit and ribosome. Forms part of the polypeptide exit tunnel. The protein is Large ribosomal subunit protein uL4 of Bacillus anthracis (strain A0248).